The sequence spans 383 residues: Na(+)/H(+) antiporter (383 aa).

12 helical membrane-spanning segments follow: residues 1-21 (MEFI…SHIS), 24-44 (FGIP…QAGL), 51-71 (ILVH…AGLE), 83-103 (PGMF…WLTG), 112-132 (EAIF…VEVL), 145-165 (TILG…SFSL), 186-206 (LFYF…LMSL), 216-236 (IIIM…LIGL), 262-282 (VEAL…GLEV), 291-311 (ILFI…GGYI), 323-343 (ALMV…ILQI), and 353-373 (HYYS…PLIL).

This sequence belongs to the monovalent cation:proton antiporter 2 (CPA2) transporter (TC 2.A.37) family.

The protein localises to the cell membrane. In terms of biological role, na(+)/H(+) antiporter that extrudes sodium in exchange for external protons. Can also transport lithium. The polypeptide is Na(+)/H(+) antiporter (napA) (Enterococcus hirae).